The chain runs to 92 residues: Transcription factor PRE5 (92 aa).

The 56-residue stretch at 4 to 59 (RRSRQTSNASRISDDQMIDLVSKLRQFLPEIHERRRSDKVSASKVLQETCNYIRKL) folds into the bHLH domain.

Belongs to the bHLH protein family. Interacts with IBH1.

It localises to the nucleus. Atypical and probable non DNA-binding bHLH transcription factor that integrates multiple signaling pathways to regulate cell elongation and plant development. May have a regulatory role in various aspects of gibberellin-dependent growth and development. This Arabidopsis thaliana (Mouse-ear cress) protein is Transcription factor PRE5 (PRE5).